A 646-amino-acid polypeptide reads, in one-letter code: Protein real-time (646 aa).

The PRELI/MSF1 domain occupies 2-175 (VQKYESPVRI…FINELKKEGI (174 aa)). One can recognise a CRAL-TRIO domain in the interval 294–471 (TPVVVEKYFP…FLGGSCITMI (178 aa)). One can recognise a GOLD domain in the interval 499–646 (HHGLYKSVDL…GFSSNSLQSR (148 aa)).

It is found in the mitochondrion. The protein is Protein real-time of Aedes aegypti (Yellowfever mosquito).